A 390-amino-acid polypeptide reads, in one-letter code: F-box/kelch-repeat protein At3g04660 (390 aa).

The F-box domain occupies 18–67 (YDPSSILPLELKIEILMKSPPKSIAKLGFVSNHWSSIIRGQVFTDLYMRR). 2 Kelch repeats span residues 115-161 (FSPP…FGYD) and 272-323 (MVDH…DQRV).

Part of a SCF (ASK-cullin-F-box) protein ligase complex. Interacts with SKP1A/ASK1, SKP1B/ASK2, ASK11 and ASK13.

It localises to the nucleus. Its pathway is protein modification; protein ubiquitination. Component of SCF(ASK-cullin-F-box) E3 ubiquitin ligase complexes, which may mediate the ubiquitination and subsequent proteasomal degradation of target proteins. This chain is F-box/kelch-repeat protein At3g04660, found in Arabidopsis thaliana (Mouse-ear cress).